Here is a 40-residue protein sequence, read N- to C-terminus: RapK inhibitor (40 aa).

2 consecutive propeptides follow at residues Met1–Ala34 and Gly40.

This sequence belongs to the Phr family. Post-translationally, contains a predicted signal peptide cleavage site in the N-terminal region, however the propeptide is probably only subject to processing events at the ends of the mature peptide.

The protein localises to the secreted. It localises to the cytoplasm. Signaling molecule involved in the regulation of genetic competence development. Secreted during production, but the mature peptide acts intracellularly, indicating that it needs to be imported into the cell to function. Stimulates expression of the genes controlled by ComA, a transcriptional factor that regulates the development of genetic competence. Acts by inhibiting RapK, which regulates the activity of ComA. The protein is RapK inhibitor (phrK) of Bacillus subtilis (strain 168).